A 427-amino-acid polypeptide reads, in one-letter code: 4-hydroxy-3-methylbut-2-en-1-yl diphosphate synthase (flavodoxin) (427 aa).

The [4Fe-4S] cluster site is built by C300, C303, C346, and E353.

The protein belongs to the IspG family. Requires [4Fe-4S] cluster as cofactor.

The enzyme catalyses (2E)-4-hydroxy-3-methylbut-2-enyl diphosphate + oxidized [flavodoxin] + H2O + 2 H(+) = 2-C-methyl-D-erythritol 2,4-cyclic diphosphate + reduced [flavodoxin]. The protein operates within isoprenoid biosynthesis; isopentenyl diphosphate biosynthesis via DXP pathway; isopentenyl diphosphate from 1-deoxy-D-xylulose 5-phosphate: step 5/6. In terms of biological role, converts 2C-methyl-D-erythritol 2,4-cyclodiphosphate (ME-2,4cPP) into 1-hydroxy-2-methyl-2-(E)-butenyl 4-diphosphate. In Chromobacterium violaceum (strain ATCC 12472 / DSM 30191 / JCM 1249 / CCUG 213 / NBRC 12614 / NCIMB 9131 / NCTC 9757 / MK), this protein is 4-hydroxy-3-methylbut-2-en-1-yl diphosphate synthase (flavodoxin).